The sequence spans 446 residues: Na(+)-translocating NADH-quinone reductase subunit A (446 aa).

Belongs to the NqrA family. In terms of assembly, composed of six subunits; NqrA, NqrB, NqrC, NqrD, NqrE and NqrF.

It carries out the reaction a ubiquinone + n Na(+)(in) + NADH + H(+) = a ubiquinol + n Na(+)(out) + NAD(+). Functionally, NQR complex catalyzes the reduction of ubiquinone-1 to ubiquinol by two successive reactions, coupled with the transport of Na(+) ions from the cytoplasm to the periplasm. NqrA to NqrE are probably involved in the second step, the conversion of ubisemiquinone to ubiquinol. This is Na(+)-translocating NADH-quinone reductase subunit A from Vibrio atlanticus (strain LGP32) (Vibrio splendidus (strain Mel32)).